The following is a 732-amino-acid chain: Exonuclease 1 (732 aa).

The interval 1–99 is N-domain; it reads MGITGLIPFV…KRRRDSRKQS (99 aa). The Mg(2+) site is built by Asp-30, Asp-78, Glu-150, Asp-152, Asp-171, Asp-173, and Asp-226. Residues 138-230 form an I-domain region; the sequence is RSRNVDCIVA…ILSGCDYLDS (93 aa). Disordered stretches follow at residues 422–471, 524–625, and 661–716; these read YSFK…QRSP, DEQT…TNST, and SCSS…VSQN. Residues Ser-431 and Ser-433 each carry the phosphoserine modification. Residues 432 to 442 show a composition bias toward basic and acidic residues; that stretch reads PSREDSVDQER. Position 443 is a phosphothreonine (Thr-443). Ser-447 carries the post-translational modification Phosphoserine. Composition is skewed to basic and acidic residues over residues 457-467 and 525-537; these read FAKERTGEEAN and EQTR…LRDT. Composition is skewed to polar residues over residues 572-593 and 608-625; these read RCSS…SLLE and DLNN…TNST. The segment covering 661–677 has biased composition (low complexity); that stretch reads SCSSDQRASSTSSSSQQ. Positions 703 to 716 are enriched in polar residues; that stretch reads KSRTNGKLGAVSQN.

The protein belongs to the XPG/RAD2 endonuclease family. EXO1 subfamily. Mg(2+) is required as a cofactor. As to expression, specifically expressed in the female germline.

Its subcellular location is the nucleus. 5'-&gt;3' double-stranded DNA exonuclease which may also contain a cryptic 3'-&gt;5' double-stranded DNA exonuclease activity. Also exhibits endonuclease activity against 5'-overhanging flap structures similar to those generated by displacement synthesis when DNA polymerase encounters the 5'-end of a downstream Okazaki fragment. Required for DNA mismatch repair (MMR). The protein is Exonuclease 1 (tos) of Drosophila melanogaster (Fruit fly).